The following is a 479-amino-acid chain: tRNA-2-methylthio-N(6)-dimethylallyladenosine synthase (479 aa).

In terms of domain architecture, MTTase N-terminal spans 3-120; the sequence is KKLYIKTWGC…LPEMVNQVSE (118 aa). Residues cysteine 12, cysteine 49, cysteine 83, cysteine 157, cysteine 161, and cysteine 164 each contribute to the [4Fe-4S] cluster site. Positions 143-375 constitute a Radical SAM core domain; it reads KADGASAFVS…QQRLNQQSMA (233 aa). One can recognise a TRAM domain in the interval 378-441; it reads RRMLETEQRI…PNSLRGELIR (64 aa).

Belongs to the methylthiotransferase family. MiaB subfamily. In terms of assembly, monomer. The cofactor is [4Fe-4S] cluster.

It is found in the cytoplasm. The enzyme catalyses N(6)-dimethylallyladenosine(37) in tRNA + (sulfur carrier)-SH + AH2 + 2 S-adenosyl-L-methionine = 2-methylsulfanyl-N(6)-dimethylallyladenosine(37) in tRNA + (sulfur carrier)-H + 5'-deoxyadenosine + L-methionine + A + S-adenosyl-L-homocysteine + 2 H(+). In terms of biological role, catalyzes the methylthiolation of N6-(dimethylallyl)adenosine (i(6)A), leading to the formation of 2-methylthio-N6-(dimethylallyl)adenosine (ms(2)i(6)A) at position 37 in tRNAs that read codons beginning with uridine. This Idiomarina loihiensis (strain ATCC BAA-735 / DSM 15497 / L2-TR) protein is tRNA-2-methylthio-N(6)-dimethylallyladenosine synthase.